Reading from the N-terminus, the 205-residue chain is uncharacterized protein (205 aa).

Positions 10 to 75 (QDLLSAVDQQ…AANLMTVMTD (66 aa)) form a coiled coil. Positions 108–141 (MPLPSSNTNNDQTSPPASGKTSETPKKNPTNAMF) are disordered. Residues 111 to 141 (PSSNTNNDQTSPPASGKTSETPKKNPTNAMF) show a composition bias toward polar residues.

This sequence belongs to the asfivirus K205R family.

It is found in the host cytoplasm. Functionally, induces host endoplasmic reticulum stress and consequently activates autophagy and NF-kappa-B signaling pathway. In turn, may induce autophagy-mediated STING1 degradation and innate immune evasion. This is an uncharacterized protein from Ornithodoros (relapsing fever ticks).